Here is a 492-residue protein sequence, read N- to C-terminus: Probable cytochrome P450 313a1 (492 aa).

C438 contacts heme.

Belongs to the cytochrome P450 family. Heme serves as cofactor.

The protein resides in the endoplasmic reticulum membrane. It is found in the microsome membrane. May be involved in the metabolism of insect hormones and in the breakdown of synthetic insecticides. The polypeptide is Probable cytochrome P450 313a1 (Cyp313a1) (Drosophila melanogaster (Fruit fly)).